Consider the following 328-residue polypeptide: DNA polymerase III subunit delta' (328 aa).

DNA polymerase III contains a core (composed of alpha, epsilon and theta chains) that associates with a tau subunit. This core dimerizes to form the POLIII' complex. PolIII' associates with the gamma complex (composed of gamma, delta, delta', psi and chi chains) and with the beta chain to form the complete DNA polymerase III complex.

The enzyme catalyses DNA(n) + a 2'-deoxyribonucleoside 5'-triphosphate = DNA(n+1) + diphosphate. Its function is as follows. DNA polymerase III is a complex, multichain enzyme responsible for most of the replicative synthesis in bacteria. This DNA polymerase also exhibits 3' to 5' exonuclease activity. The polypeptide is DNA polymerase III subunit delta' (holB) (Pseudomonas aeruginosa (strain ATCC 15692 / DSM 22644 / CIP 104116 / JCM 14847 / LMG 12228 / 1C / PRS 101 / PAO1)).